A 328-amino-acid chain; its full sequence is Biotin synthase (328 aa).

Positions Asn43–Arg272 constitute a Radical SAM core domain. Cys58, Cys62, and Cys65 together coordinate [4Fe-4S] cluster. 4 residues coordinate [2Fe-2S] cluster: Cys103, Cys135, Cys195, and Arg267.

Belongs to the radical SAM superfamily. Biotin synthase family. In terms of assembly, homodimer. It depends on [4Fe-4S] cluster as a cofactor. Requires [2Fe-2S] cluster as cofactor.

The catalysed reaction is (4R,5S)-dethiobiotin + (sulfur carrier)-SH + 2 reduced [2Fe-2S]-[ferredoxin] + 2 S-adenosyl-L-methionine = (sulfur carrier)-H + biotin + 2 5'-deoxyadenosine + 2 L-methionine + 2 oxidized [2Fe-2S]-[ferredoxin]. It functions in the pathway cofactor biosynthesis; biotin biosynthesis; biotin from 7,8-diaminononanoate: step 2/2. Functionally, catalyzes the conversion of dethiobiotin (DTB) to biotin by the insertion of a sulfur atom into dethiobiotin via a radical-based mechanism. The protein is Biotin synthase of Allorhizobium ampelinum (strain ATCC BAA-846 / DSM 112012 / S4) (Agrobacterium vitis (strain S4)).